We begin with the raw amino-acid sequence, 374 residues long: UPF0674 endoplasmic reticulum membrane protein C2G5.01 (374 aa).

Residues 49–68 traverse the membrane as a helical segment; that stretch reads FRLEFVILACFFLYVFSFIT. N-linked (GlcNAc...) asparagine glycosylation occurs at asparagine 287. The tract at residues 335–374 is disordered; it reads KAAKKKVKSSGDISKLSESDQKKRMERERQRKMRRRAKKM. The span at 349 to 363 shows a compositional bias: basic and acidic residues; it reads KLSESDQKKRMERER. The span at 364-374 shows a compositional bias: basic residues; sequence QRKMRRRAKKM.

It belongs to the UPF0674 family.

It localises to the endoplasmic reticulum membrane. In Schizosaccharomyces pombe (strain 972 / ATCC 24843) (Fission yeast), this protein is UPF0674 endoplasmic reticulum membrane protein C2G5.01.